We begin with the raw amino-acid sequence, 221 residues long: D-glycero-alpha-D-manno-heptose 1-phosphate guanylyltransferase (221 aa).

Belongs to the D-alpha-D-heptose-1-P guanylyltransferase family.

The enzyme catalyses D-glycero-alpha-D-manno-heptose 1-phosphate + GTP + H(+) = GDP-D-glycero-alpha-D-manno-heptose + diphosphate. It participates in nucleotide-sugar biosynthesis; GDP-D-glycero-alpha-D-manno-heptose biosynthesis; GDP-D-glycero-alpha-D-manno-heptose from D-glycero-alpha-D-manno-heptose 7-phosphate: step 3/3. It functions in the pathway capsule biogenesis; capsule polysaccharide biosynthesis. Its function is as follows. Catalyzes the GDP transfer from GTP to D-glycero-alpha-D-manno-heptose 1-phosphate, yielding GDP-D-alpha-D-heptose. Is able to use ATP, CTP or UTP as substrate in the presence of pyrophosphatase, but at a significantly slower rate. Can also form GDP-alpha-D-mannose from alpha-D-mannose 1-phosphate and GTP. In Campylobacter jejuni subsp. jejuni serotype O:2 (strain ATCC 700819 / NCTC 11168), this protein is D-glycero-alpha-D-manno-heptose 1-phosphate guanylyltransferase.